Consider the following 1335-residue polypeptide: Protein SPATA31F1 (1335 aa).

The chain crosses the membrane as a helical span at residues 8–28 (LWEVGYPLYIYGSIFIVIVII). Disordered regions lie at residues 403-424 (ALKA…SGSD), 480-502 (LPKT…MSPS), 972-1002 (VQQN…SGDM), 1019-1141 (PSLE…LQDS), and 1248-1335 (ENVA…GHPT). Positions 414 to 424 (SGGQDNDSGSD) are enriched in polar residues. The span at 972–1000 (VQQNQKQSNSKAVPQGSAHSVSKISQPSG) shows a compositional bias: polar residues. 3 stretches are compositionally biased toward basic and acidic residues: residues 1047–1064 (NRED…REGD), 1071–1083 (STRE…EDQR), and 1129–1139 (PGEKESEKDLQ).

It belongs to the SPATA31 family.

It localises to the membrane. In Homo sapiens (Human), this protein is Protein SPATA31F1.